A 429-amino-acid polypeptide reads, in one-letter code: [LysW]-aminoadipate semialdehyde transaminase (429 aa).

Pyridoxal 5'-phosphate-binding positions include 112–113 (GT) and Phe139. Arg142 contacts substrate. Pyridoxal 5'-phosphate is bound at residue 226–229 (DEIQ). At Lys255 the chain carries N6-(pyridoxal phosphate)lysine. Thr283 is a binding site for substrate. Residue Thr284 participates in pyridoxal 5'-phosphate binding. The tract at residues 408 to 429 (LRAQQSEMGQQQVSQGESVQTE) is disordered. Positions 411–429 (QQSEMGQQQVSQGESVQTE) are enriched in low complexity.

The protein belongs to the class-III pyridoxal-phosphate-dependent aminotransferase family. LysJ subfamily. Homodimer. The cofactor is pyridoxal 5'-phosphate.

It localises to the cytoplasm. The catalysed reaction is [amino-group carrier protein]-C-terminal-gamma-(L-lysyl)-L-glutamate + 2-oxoglutarate = [amino-group carrier protein]-C-terminal-N-(1-carboxy-5-oxopentan-1-yl)-L-glutamine + L-glutamate. The protein operates within amino-acid biosynthesis; L-lysine biosynthesis via AAA pathway; L-lysine from L-alpha-aminoadipate (Thermus route): step 4/5. Functionally, catalyzes the transfer of the amino group of L-glutamate to [LysW]-aminoadipate 6-semialdehyde, generating [LysW]-gamma-L-lysine. This chain is [LysW]-aminoadipate semialdehyde transaminase, found in Deinococcus radiodurans (strain ATCC 13939 / DSM 20539 / JCM 16871 / CCUG 27074 / LMG 4051 / NBRC 15346 / NCIMB 9279 / VKM B-1422 / R1).